A 65-amino-acid polypeptide reads, in one-letter code: VESP-VB2 (65 aa).

The first 23 residues, 1 to 23, serve as a signal peptide directing secretion; the sequence is MKMSILFLFALIASLACLQLTFA. AXPX repeat units follow at residues 23–26, 27–30, 31–34, 35–38, 39–42, 43–46, and 47–50; these read AAPA, ASPF, ANPG, ASPE, AAPL, ADPL, and ADPF. The propeptide occupies 24-49; it reads APAASPFANPGASPEAAPLADPLADP. At Leu62 the chain carries Leucine amide.

It belongs to the MCD family. Mastoparan subfamily. As to expression, expressed by the venom gland.

The protein resides in the secreted. Functionally, antimicrobial peptide. Shows activity against both Gram-positive and -negative bacteria, as well against fungi. Also promotes important mast cell degranulation. Shows little hemolytic activity on rabbit and human erythrocytes. Its mast cell degranulation activity may be related to the activation of G-protein coupled receptors in mast cells as well as interaction with other proteins located in cell endosomal membranes in the mast cells. The chain is VESP-VB2 from Vespa bicolor (Black shield wasp).